We begin with the raw amino-acid sequence, 617 residues long: Elongation factor 4 (617 aa).

Residues glutamate 17–valine 203 enclose the tr-type G domain. GTP contacts are provided by residues aspartate 29–threonine 34 and asparagine 150–aspartate 153.

Belongs to the TRAFAC class translation factor GTPase superfamily. Classic translation factor GTPase family. LepA subfamily.

It localises to the cell membrane. The enzyme catalyses GTP + H2O = GDP + phosphate + H(+). Functionally, required for accurate and efficient protein synthesis under certain stress conditions. May act as a fidelity factor of the translation reaction, by catalyzing a one-codon backward translocation of tRNAs on improperly translocated ribosomes. Back-translocation proceeds from a post-translocation (POST) complex to a pre-translocation (PRE) complex, thus giving elongation factor G a second chance to translocate the tRNAs correctly. Binds to ribosomes in a GTP-dependent manner. The sequence is that of Elongation factor 4 from Corynebacterium urealyticum (strain ATCC 43042 / DSM 7109).